The following is a 525-amino-acid chain: Phosphoenolpyruvate carboxykinase (ATP) 1 (525 aa).

Positions 55, 190, and 196 each coordinate substrate. ATP is bound by residues Lys196, His215, and 231–239 (GLSGTGKTT). Residues Lys196 and His215 each coordinate Mn(2+). Asp252 serves as a coordination point for Mn(2+). 3 residues coordinate ATP: Glu280, Arg317, and Thr442. Arg317 is a binding site for substrate.

It belongs to the phosphoenolpyruvate carboxykinase (ATP) family. It depends on Mn(2+) as a cofactor.

It is found in the cytoplasm. The catalysed reaction is oxaloacetate + ATP = phosphoenolpyruvate + ADP + CO2. Its pathway is carbohydrate biosynthesis; gluconeogenesis. Involved in the gluconeogenesis. Catalyzes the conversion of oxaloacetate (OAA) to phosphoenolpyruvate (PEP) through direct phosphoryl transfer between the nucleoside triphosphate and OAA. The polypeptide is Phosphoenolpyruvate carboxykinase (ATP) 1 (Moorella thermoacetica (strain ATCC 39073 / JCM 9320)).